Reading from the N-terminus, the 210-residue chain is Na(+)-translocating NADH-quinone reductase subunit D (210 aa).

A run of 6 helical transmembrane segments spans residues 14-34 (PIIN…ALAV), 42-62 (LVMS…ISLI), 72-92 (IIVQ…VLQA), 96-116 (EIAK…IVMG), 131-151 (FMDG…VGFF), and 178-198 (NGLL…IWVI).

Belongs to the NqrDE/RnfAE family. As to quaternary structure, composed of six subunits; NqrA, NqrB, NqrC, NqrD, NqrE and NqrF.

Its subcellular location is the cell inner membrane. It catalyses the reaction a ubiquinone + n Na(+)(in) + NADH + H(+) = a ubiquinol + n Na(+)(out) + NAD(+). Functionally, NQR complex catalyzes the reduction of ubiquinone-1 to ubiquinol by two successive reactions, coupled with the transport of Na(+) ions from the cytoplasm to the periplasm. NqrA to NqrE are probably involved in the second step, the conversion of ubisemiquinone to ubiquinol. The polypeptide is Na(+)-translocating NADH-quinone reductase subunit D (Shewanella denitrificans (strain OS217 / ATCC BAA-1090 / DSM 15013)).